A 72-amino-acid polypeptide reads, in one-letter code: Translation initiation factor IF-1 (72 aa).

Residues 1 to 72 form the S1-like domain; sequence MSKEDVIEVE…SRGRIVYRFK (72 aa).

This sequence belongs to the IF-1 family. As to quaternary structure, component of the 30S ribosomal translation pre-initiation complex which assembles on the 30S ribosome in the order IF-2 and IF-3, IF-1 and N-formylmethionyl-tRNA(fMet); mRNA recruitment can occur at any time during PIC assembly.

The protein localises to the cytoplasm. In terms of biological role, one of the essential components for the initiation of protein synthesis. Stabilizes the binding of IF-2 and IF-3 on the 30S subunit to which N-formylmethionyl-tRNA(fMet) subsequently binds. Helps modulate mRNA selection, yielding the 30S pre-initiation complex (PIC). Upon addition of the 50S ribosomal subunit IF-1, IF-2 and IF-3 are released leaving the mature 70S translation initiation complex. This is Translation initiation factor IF-1 from Desulfitobacterium hafniense (strain Y51).